A 347-amino-acid polypeptide reads, in one-letter code: Two pore potassium channel a (347 aa).

Over residues Met-1–Leu-11 the composition is skewed to polar residues. The disordered stretch occupies residues Met-1–Ser-49. Over Met-1–Arg-65 the chain is Cytoplasmic. Residues Leu-66–Met-86 traverse the membrane as a helical segment. The segment at residues Asp-99–Pro-118 is an intramembrane region (pore-forming). The helical transmembrane segment at Leu-125–Val-145 threads the bilayer. Residues Ala-146–Tyr-183 are Cytoplasmic-facing. The chain crosses the membrane as a helical span at residues Lys-184–Trp-204. The pore-forming intramembrane region spans Asp-213–Phe-232. The chain crosses the membrane as a helical span at residues Val-239–Leu-259. The Cytoplasmic segment spans residues Ala-260–Gln-347. EF-hand domains follow at residues Leu-276 to Lys-311 and Glu-315 to Gln-347. Ca(2+) contacts are provided by Asp-289, Asp-291, Asp-293, Gln-295, Glu-300, Asp-328, Asp-330, Ser-332, Thr-334, and Asp-339.

The protein belongs to the two pore domain potassium channel (TC 1.A.1.7) family. As to quaternary structure, homodimer.

It localises to the vacuole membrane. Highly selective inward-rectifying potassium channel that is specifically located in the tonoplast of large vacuoles. Functions independently of the voltage difference across the membrane. The polypeptide is Two pore potassium channel a (TPKA) (Oryza sativa subsp. japonica (Rice)).